A 185-amino-acid polypeptide reads, in one-letter code: Ribosome-recycling factor (185 aa).

It belongs to the RRF family.

It localises to the cytoplasm. Its function is as follows. Responsible for the release of ribosomes from messenger RNA at the termination of protein biosynthesis. May increase the efficiency of translation by recycling ribosomes from one round of translation to another. This is Ribosome-recycling factor from Klebsiella pneumoniae (strain 342).